We begin with the raw amino-acid sequence, 357 residues long: 3-isopropylmalate dehydrogenase (357 aa).

Residues arginine 97, arginine 107, arginine 135, and aspartate 224 each contribute to the substrate site. Residues aspartate 224, aspartate 248, and aspartate 252 each coordinate Mg(2+). NAD(+) is bound at residue glycine 282–asparagine 294.

It belongs to the isocitrate and isopropylmalate dehydrogenases family. LeuB type 1 subfamily. As to quaternary structure, homodimer. Requires Mg(2+) as cofactor. Mn(2+) serves as cofactor.

The protein localises to the cytoplasm. It carries out the reaction (2R,3S)-3-isopropylmalate + NAD(+) = 4-methyl-2-oxopentanoate + CO2 + NADH. The protein operates within amino-acid biosynthesis; L-leucine biosynthesis; L-leucine from 3-methyl-2-oxobutanoate: step 3/4. Catalyzes the oxidation of 3-carboxy-2-hydroxy-4-methylpentanoate (3-isopropylmalate) to 3-carboxy-4-methyl-2-oxopentanoate. The product decarboxylates to 4-methyl-2 oxopentanoate. This chain is 3-isopropylmalate dehydrogenase, found in Prochlorococcus marinus (strain MIT 9313).